A 466-amino-acid polypeptide reads, in one-letter code: Argininosuccinate lyase (466 aa).

The protein belongs to the lyase 1 family. Argininosuccinate lyase subfamily.

The protein resides in the cytoplasm. The catalysed reaction is 2-(N(omega)-L-arginino)succinate = fumarate + L-arginine. Its pathway is amino-acid biosynthesis; L-arginine biosynthesis; L-arginine from L-ornithine and carbamoyl phosphate: step 3/3. The chain is Argininosuccinate lyase from Brucella anthropi (strain ATCC 49188 / DSM 6882 / CCUG 24695 / JCM 21032 / LMG 3331 / NBRC 15819 / NCTC 12168 / Alc 37) (Ochrobactrum anthropi).